The primary structure comprises 348 residues: D-alanine--D-alanine ligase (348 aa).

Residues 132 to 334 (KRILEVAGVP…YSDIIKELVV (203 aa)) form the ATP-grasp domain. 162–217 (LEKLTFPVFVKPANMGSSVGISKAENESELRSAIDLALKYDSRILIEQGVVAREIE) is a binding site for ATP. Mg(2+) is bound by residues Asp288, Glu301, and Asn303.

This sequence belongs to the D-alanine--D-alanine ligase family. Requires Mg(2+) as cofactor. It depends on Mn(2+) as a cofactor.

Its subcellular location is the cytoplasm. The catalysed reaction is 2 D-alanine + ATP = D-alanyl-D-alanine + ADP + phosphate + H(+). The protein operates within cell wall biogenesis; peptidoglycan biosynthesis. Cell wall formation. In Streptococcus thermophilus (strain CNRZ 1066), this protein is D-alanine--D-alanine ligase.